The following is a 479-amino-acid chain: Mitochondria-eating protein (479 aa).

Coiled-coil stretches lie at residues glutamate 109–threonine 161 and leucine 187–arginine 223. Disordered regions lie at residues arginine 220–arginine 251 and arginine 456–arginine 479. Positions arginine 235–arginine 249 are enriched in low complexity.

This sequence belongs to the MIEAP family.

The protein resides in the cytoplasm. It is found in the cytosol. The protein localises to the mitochondrion outer membrane. Its subcellular location is the mitochondrion matrix. Key regulator of mitochondrial quality that mediates the repairing or degradation of unhealthy mitochondria in response to mitochondrial damage. Mediator of mitochondrial protein catabolic process (also named MALM) by mediating the degradation of damaged proteins inside mitochondria by promoting the accumulation in the mitochondrial matrix of hydrolases that are characteristic of the lysosomal lumen. Also involved in mitochondrion degradation of damaged mitochondria by promoting the formation of vacuole-like structures (named MIV), which engulf and degrade unhealthy mitochondria by accumulating lysosomes. Binds cardiolipin. May form molecular condensates (non-membrane-bounded organelles) within mitochondria that compartmentalize and promote cardiolipin metabolism. The sequence is that of Mitochondria-eating protein (SPATA18) from Gallus gallus (Chicken).